The sequence spans 280 residues: Pantothenate synthetase (280 aa).

ATP is bound at residue 26-33 (MGNLHDGH). The Proton donor role is filled by His-33. Gln-57 serves as a coordination point for (R)-pantoate. Beta-alanine is bound at residue Gln-57. 147–150 (GKKD) provides a ligand contact to ATP. Gln-153 is a (R)-pantoate binding site. Residue 184–187 (LSSR) participates in ATP binding.

This sequence belongs to the pantothenate synthetase family. Homodimer.

It is found in the cytoplasm. The enzyme catalyses (R)-pantoate + beta-alanine + ATP = (R)-pantothenate + AMP + diphosphate + H(+). It functions in the pathway cofactor biosynthesis; (R)-pantothenate biosynthesis; (R)-pantothenate from (R)-pantoate and beta-alanine: step 1/1. Its function is as follows. Catalyzes the condensation of pantoate with beta-alanine in an ATP-dependent reaction via a pantoyl-adenylate intermediate. This is Pantothenate synthetase from Verminephrobacter eiseniae (strain EF01-2).